The chain runs to 108 residues: UPF0145 protein Acel_2109 (108 aa).

The protein belongs to the UPF0145 family.

The protein is UPF0145 protein Acel_2109 of Acidothermus cellulolyticus (strain ATCC 43068 / DSM 8971 / 11B).